The sequence spans 2603 residues: Ankyrin repeat domain-containing protein 17 (2603 aa).

An N-acetylmethionine modification is found at Met1. The span at 1–32 shows a compositional bias: low complexity; the sequence is MEKATVPAAAEGEGSPPAAAAVAAPPAAAAAE. A disordered region spans residues 1 to 127; the sequence is MEKATVPAAA…DDDEEEEVSE (127 aa). A phosphoserine mark is found at Ser15 and Ser42. The segment covering 68 to 77 has biased composition (basic residues); it reads PHHKAKRNRT. A compositionally biased stretch (low complexity) spans 82–92; that stretch reads SSSESSSDSDN. Over residues 93-107 the composition is skewed to gly residues; it reads SGGGGGGGGGGGGGT. The span at 112-127 shows a compositional bias: acidic residues; that stretch reads SEEEEDDDDEEEEVSE. Ser152 carries the post-translational modification Phosphoserine. ANK repeat units follow at residues 229–258, 262–291, 296–325, 329–358, 362–391, 396–425, 429–458, 462–491, 495–524, 529–558, 559–588, 592–621, 625–654, 659–688, and 692–721; these read SDNR…SVNE, EGES…NVED, GDIT…DVNA, TGNT…SIED, NGHT…GINT, FKES…DQEH, EMHT…QVNM, SFES…SLEE, EGYT…NINA, TQET…DIEL, GCST…NVHA, TGDT…DLEH, GGRT…NVNR, NDHT…DPTH, and DGST…NLLA. A Glycyl lysine isopeptide (Lys-Gly) (interchain with G-Cter in SUMO2) cross-link involves residue Lys314. Residues 770–792 form a disordered region; sequence VRSKAASKQKSNSHLPANSQDVQ. The segment covering 775 to 792 has biased composition (polar residues); it reads ASKQKSNSHLPANSQDVQ. Ser799 is modified (phosphoserine). 10 ANK repeats span residues 1078–1107, 1111–1140, 1145–1174, 1178–1207, 1213–1242, 1247–1276, 1280–1309, 1315–1344, 1348–1377, and 1381–1410; these read NHDT…SIEH, KGFT…DIEA, TKDT…NKEH, SDYT…EINS, LGIS…DINA, NRNT…NVEH, TGLT…DVNA, SRDT…HIDV, KGNT…DVDA, and RKIT…QFPS. The stretch at 1438 to 1522 forms a coiled coil; the sequence is VQAKDRQAAE…EKEKLKVEEE (85 aa). Residue Ser1453 is modified to Phosphoserine. Disordered regions lie at residues 1475–1496 and 1513–1713; these read AKRE…RKLE and EKEK…PKRE. Over residues 1477-1487 the composition is skewed to basic residues; that stretch reads REKRKEKRRKK. Low complexity-rich tracts occupy residues 1526-1546, 1598-1607, and 1616-1636; these read LTEP…TWTT, ESKSSSTSES, and SSCS…NHAS. Position 1631 is a phosphoserine (Ser1631). 2 stretches are compositionally biased toward polar residues: residues 1638-1648 and 1671-1699; these read VVTTTMASKKQ and LSET…SPNG. Phosphoserine occurs at positions 1692, 1696, and 1705. Positions 1721–1785 constitute a KH domain; sequence RRSKKVSVPS…ESTRQATQLI (65 aa). Arg1870 is modified (asymmetric dimethylarginine). 3 disordered regions span residues 1902–1991, 2007–2195, and 2269–2327; these read PRLP…PSVR, TTVT…SSSA, and VSSQ…YGSV. Low complexity-rich tracts occupy residues 1946 to 1989 and 2007 to 2024; these read SNQN…SSPS and TTVT…TNAT. Ser2038, Ser2040, Ser2041, Ser2043, Ser2055, and Ser2063 each carry phosphoserine. Composition is skewed to low complexity over residues 2068–2077, 2087–2108, and 2175–2189; these read ASASEQEASS, RPPH…QQPP, and PPSH…TPAP. Positions 2269–2298 are enriched in polar residues; the sequence is VSSQSTPESMLSGKSSYLPNSDPLHQSDTS. Pro residues predominate over residues 2303 to 2313; the sequence is FRPPLQRPAPS. Ser2373 is modified (phosphoserine). Residues 2378 to 2447 form a disordered region; the sequence is LTPCSSASNE…TGTSAPSVIG (70 aa). Residues 2379–2391 show a composition bias toward polar residues; the sequence is TPCSSASNESPAQ. Residues 2392–2411 are compositionally biased toward low complexity; the sequence is SVSSGVRAPSPAPSSVPLGS. Ser2401 is modified (phosphoserine). Residues 2435-2447 show a composition bias toward polar residues; the sequence is IRQTGTSAPSVIG.

In terms of assembly, interacts (via N-terminus) with NOD2. Interacts with CDK2, MCM3, MCM5, MCM7, CDC6 and PCNA. Interacts with MAVS and IFIH1. Interacts (via the second ankyrin repeat cluster) with RIGI. Phosphorylated by CDK2. Highly expressed in fetal liver. Detected in adult liver cells, ovarian oocytes, seminiferous tubules of the testes and pelvic region of the kidney. It was not detected in heart, gut, lung, spleen and skeletal muscle. Earliest specific in situ marker of hepatic differentiation during embryogenesis, useful for characterization of inductive events involved in hepatic specification.

It is found in the cytoplasm. The protein resides in the nucleus. In terms of biological role, could play pivotal roles in cell cycle and DNA regulation. Involved in innate immune defense against viruse by positively regulating the viral dsRNA receptors RIGI and IFIH1 signaling pathways. Involves in NOD2- and NOD1-mediated responses to bacteria suggesting a role in innate antibacterial immune pathways too. Could play a central role for the formation and/or maintenance of the blood vessels of the circulation system. The polypeptide is Ankyrin repeat domain-containing protein 17 (Ankrd17) (Mus musculus (Mouse)).